We begin with the raw amino-acid sequence, 142 residues long: Large ribosomal subunit protein uL11 (142 aa).

The protein belongs to the universal ribosomal protein uL11 family. As to quaternary structure, part of the ribosomal stalk of the 50S ribosomal subunit. Interacts with L10 and the large rRNA to form the base of the stalk. L10 forms an elongated spine to which L12 dimers bind in a sequential fashion forming a multimeric L10(L12)X complex. One or more lysine residues are methylated.

Forms part of the ribosomal stalk which helps the ribosome interact with GTP-bound translation factors. The sequence is that of Large ribosomal subunit protein uL11 from Acinetobacter baylyi (strain ATCC 33305 / BD413 / ADP1).